A 102-amino-acid chain; its full sequence is Legumin-like protein Mac i 2 (102 aa).

Belongs to the 11S seed storage protein (globulins) family.

In terms of biological role, seed storage protein. The sequence is that of Legumin-like protein Mac i 2 from Macadamia integrifolia (Macadamia nut).